The sequence spans 254 residues: 3-deoxy-manno-octulosonate cytidylyltransferase (254 aa).

The protein belongs to the KdsB family.

Its subcellular location is the cytoplasm. The enzyme catalyses 3-deoxy-alpha-D-manno-oct-2-ulosonate + CTP = CMP-3-deoxy-beta-D-manno-octulosonate + diphosphate. Its pathway is nucleotide-sugar biosynthesis; CMP-3-deoxy-D-manno-octulosonate biosynthesis; CMP-3-deoxy-D-manno-octulosonate from 3-deoxy-D-manno-octulosonate and CTP: step 1/1. It participates in bacterial outer membrane biogenesis; lipopolysaccharide biosynthesis. In terms of biological role, activates KDO (a required 8-carbon sugar) for incorporation into bacterial lipopolysaccharide in Gram-negative bacteria. In Haemophilus influenzae (strain PittGG), this protein is 3-deoxy-manno-octulosonate cytidylyltransferase.